Here is a 228-residue protein sequence, read N- to C-terminus: Probable methylthioribulose-1-phosphate dehydratase (228 aa).

C87 serves as a coordination point for substrate. The Zn(2+) site is built by H105 and H107. E129 acts as the Proton donor/acceptor in catalysis. H185 provides a ligand contact to Zn(2+).

The protein belongs to the aldolase class II family. MtnB subfamily. Requires Zn(2+) as cofactor.

The protein resides in the cytoplasm. The enzyme catalyses 5-(methylsulfanyl)-D-ribulose 1-phosphate = 5-methylsulfanyl-2,3-dioxopentyl phosphate + H2O. Its pathway is amino-acid biosynthesis; L-methionine biosynthesis via salvage pathway; L-methionine from S-methyl-5-thio-alpha-D-ribose 1-phosphate: step 2/6. Functionally, catalyzes the dehydration of methylthioribulose-1-phosphate (MTRu-1-P) into 2,3-diketo-5-methylthiopentyl-1-phosphate (DK-MTP-1-P). The protein is Probable methylthioribulose-1-phosphate dehydratase of Drosophila willistoni (Fruit fly).